The sequence spans 310 residues: MIGAGPVGLFAAHFAHLHGLSSLIFDSLSEVGGQPQMLYPFKKISDIPAYNSINGTALIQNLKSGLPKETEIITNHKVNDIKKNADGFVLDNVVLAKSIIIATGAGAFKPKELPLKMRDEIQKRVHYFIKDPKDFANQKIGVFGGGNSALDLAIELANYANVKIIHRRNEFRGLELNVKKLRSLTNVEILTPYLPKDIQLINNQLDITLKGMGDVQSRHEQFDQIVVAYGFKADNRFIKNWGIELNGTNIAVDPTMKTNIDGIYAAGDVVSYPGRVPLIALGFGEAQIAITSIMRDLFPEKTLTIHSTSI.

FAD is bound by residues D26, Q34, Y39, V78, F108, D268, and T308.

Belongs to the ferredoxin--NADP reductase type 2 family. In terms of assembly, homodimer. FAD is required as a cofactor.

It catalyses the reaction 2 reduced [2Fe-2S]-[ferredoxin] + NADP(+) + H(+) = 2 oxidized [2Fe-2S]-[ferredoxin] + NADPH. In Lactobacillus helveticus (strain DPC 4571), this protein is Ferredoxin--NADP reductase.